A 365-amino-acid chain; its full sequence is tRNA/tmRNA (uracil-C(5))-methyltransferase (365 aa).

The S-adenosyl-L-methionine site is built by Gln-189, Tyr-217, Asn-222, Glu-238, and Asp-298. Cys-323 serves as the catalytic Nucleophile. Glu-357 acts as the Proton acceptor in catalysis.

It belongs to the class I-like SAM-binding methyltransferase superfamily. RNA M5U methyltransferase family. TrmA subfamily.

It carries out the reaction uridine(54) in tRNA + S-adenosyl-L-methionine = 5-methyluridine(54) in tRNA + S-adenosyl-L-homocysteine + H(+). It catalyses the reaction uridine(341) in tmRNA + S-adenosyl-L-methionine = 5-methyluridine(341) in tmRNA + S-adenosyl-L-homocysteine + H(+). Functionally, dual-specificity methyltransferase that catalyzes the formation of 5-methyluridine at position 54 (m5U54) in all tRNAs, and that of position 341 (m5U341) in tmRNA (transfer-mRNA). This is tRNA/tmRNA (uracil-C(5))-methyltransferase from Proteus mirabilis (strain HI4320).